The chain runs to 452 residues: MLKLQMVLMSLLLLPLIVNLYPWIIALTLSALLLPTCFNLVNSASYSMFTEYMSSDMMSFTLSALTIWVTVMMILASTKIMHLNMYPKMFMTNLVILLIILINCFLSPNLIMFYIWFEASLIPTMVLIMTWGYQPERSQASMYLMIYTVAASLPMLMVLCKIFIVSKTAMMPMFMNMEFPMDYPSMALAWVLTLGGFLVKLPMFTVHLWLPKAHVEAPIAGSMILAAILLKLGGYGILRMLSLFHYMAKSTSSLLSSVALVGAVSTSLICLRQSDLKSLIAYSSVGHMGLMVAGALMSSNWGFQAALAMMIAHGLSSSALFVMANMNYELTHTRSLFLMKGLLVLAPTLTMWWFLFTASNMAAPPSINLLSEIMLITSILKMSTSAFILLGLTSFFTAAYCLYMYTSMHHGPLMLTSNPIPQFKVKDLTLMTMHLVPTILIIFKPELITSWS.

The next 14 helical transmembrane spans lie at 7 to 27 (VLMSLLLLPLIVNLYPWIIAL), 57 to 77 (MMSFTLSALTIWVTVMMILAS), 95 to 115 (VILLIILINCFLSPNLIMFYI), 116 to 136 (WFEASLIPTMVLIMTWGYQPE), 145 to 165 (MIYTVAASLPMLMVLCKIFIV), 186 to 206 (MALAWVLTLGGFLVKLPMFTV), 218 to 238 (PIAGSMILAAILLKLGGYGIL), 251 to 271 (TSSLLSSVALVGAVSTSLICL), 278 to 298 (SLIAYSSVGHMGLMVAGALMS), 303 to 323 (FQAALAMMIAHGLSSSALFVM), 336 to 356 (LFLMKGLLVLAPTLTMWWFLF), 360 to 380 (NMAAPPSINLLSEIMLITSIL), 386 to 406 (AFILLGLTSFFTAAYCLYMYT), and 428 to 448 (LTLMTMHLVPTILIIFKPELI).

The protein belongs to the complex I subunit 4 family.

The protein resides in the mitochondrion membrane. It catalyses the reaction a ubiquinone + NADH + 5 H(+)(in) = a ubiquinol + NAD(+) + 4 H(+)(out). Core subunit of the mitochondrial membrane respiratory chain NADH dehydrogenase (Complex I) that is believed to belong to the minimal assembly required for catalysis. Complex I functions in the transfer of electrons from NADH to the respiratory chain. The immediate electron acceptor for the enzyme is believed to be ubiquinone. The sequence is that of NADH-ubiquinone oxidoreductase chain 4 (ND4) from Lumbricus terrestris (Common earthworm).